The following is a 102-amino-acid chain: MAKEKIRIRLKAYDHRILDQSAEKIVETAKRSGATVSGPIPLPTEKTVYTILRAVHKYKDSREQFEMRTHKRLIDIVSPTPQTVDSLMRLDLXSGVDIEIKL.

This sequence belongs to the universal ribosomal protein uS10 family. In terms of assembly, part of the 30S ribosomal subunit.

Involved in the binding of tRNA to the ribosomes. This chain is Small ribosomal subunit protein uS10, found in Bacillus cereus (strain ATCC 10987 / NRS 248).